The chain runs to 277 residues: 4-hydroxy-3-prenylphenylpyruvate oxygenase/4-hydroxy-3-prenylbenzoate synthase (277 aa).

Belongs to the aldolase class II family. Homotetramer. It depends on Fe(2+) as a cofactor.

It catalyses the reaction 3-dimethylallyl-4-hydroxyphenylpyruvate + O2 = 3-dimethylallyl-4-hydroxymandelate + CO2. The enzyme catalyses 3-dimethylallyl-4-hydroxymandelate + O2 = 3-dimethylallyl-4-hydroxybenzoate + CO2 + H2O. Its pathway is antibiotic biosynthesis. Its activity is regulated as follows. Activated by ascorbate. In terms of biological role, involved in the biosynthesis of ring A of the aminocoumarin antibiotic clorobiocin. Catalyzes two consecutive oxidative decarboxylations of 3-dimethylallyl-4-hydroxyphenylpyruvate (3DMA-4HPP) to yield 3-dimethylallyl-4-hydroxybenzoate (3DMA-4HB) via the 3-dimethylallyl-4-hydroxymandelic acid (3DMA-4HMA) intermediate. This is 4-hydroxy-3-prenylphenylpyruvate oxygenase/4-hydroxy-3-prenylbenzoate synthase from Streptomyces roseochromogenus subsp. oscitans.